The primary structure comprises 522 residues: Sugar transport protein 1 (522 aa).

Over 1-22 (MPAGGFVVGDGQKAYPGKLTPF) the chain is Cytoplasmic. A helical transmembrane segment spans residues 23 to 43 (VLFTCVVAAMGGLIFGYDIGI). Over 44 to 79 (SGGVTSMPSFLKRFFPSVYRKQQEDASTNQYCQYDS) the chain is Extracellular. Residues 80 to 100 (PTLTMFTSSLYLAALISSLVA) form a helical membrane-spanning segment. The Cytoplasmic portion of the chain corresponds to 101-117 (STVTRKFGRRLSMLFGG). A helical membrane pass occupies residues 118–138 (ILFCAGALINGFAKHVWMLIV). Over 139-140 (GR) the chain is Extracellular. Residues 141–161 (ILLGFGIGFANQAVPLYLSEM) form a helical membrane-spanning segment. Topologically, residues 162–171 (APYKYRGALN) are cytoplasmic. Residues 172–192 (IGFQLSITIGILVAEVLNYFF) traverse the membrane as a helical segment. Topologically, residues 193 to 202 (AKIKGGWGWR) are extracellular. A helical membrane pass occupies residues 203-223 (LSLGGAVVPALIITIGSLVLP). Residues 224–289 (DTPNSMIERG…YRPHLTMAVM (66 aa)) are Cytoplasmic-facing. At Ser-252 the chain carries Phosphoserine. Residues 290–310 (IPFFQQLTGINVIMFYAPVLF) form a helical membrane-spanning segment. Over 311-321 (NTIGFTTDASL) the chain is Extracellular. A helical membrane pass occupies residues 322-342 (MSAVVTGSVNVAATLVSIYGV). The Cytoplasmic segment spans residues 343–348 (DRWGRR). A helical transmembrane segment spans residues 349–369 (FLFLEGGTQMLICQAVVAACI). Topologically, residues 370 to 384 (GAKFGVDGTPGELPK) are extracellular. The chain crosses the membrane as a helical span at residues 385–405 (WYAIVVVTFICIYVAGFAWSW). At 406–427 (GPLGWLVPSEIFPLEIRSAAQS) the chain is on the cytoplasmic side. A helical transmembrane segment spans residues 428-448 (ITVSVNMIFTFIIAQIFLTML). At 449-452 (CHLK) the chain is on the extracellular side. A helical transmembrane segment spans residues 453 to 473 (FGLFLVFAFFVVVMSIFVYIF). Over 474–522 (LPETKGIPIEEMGQVWRSHWYWSRFVEDGEYGNALEMGKNSNQAGTKHV) the chain is Cytoplasmic.

This sequence belongs to the major facilitator superfamily. Sugar transporter (TC 2.A.1.1) family. Mostly expressed in young leaves, especially in guard cells (at protein level). Also present in roots.

The protein resides in the cell membrane. Functionally, major hexose transporter. Mediates an active uptake of hexoses, by sugar/hydrogen symport. Can transport glucose, 3-O-methylglucose, fructose, xylose, mannose, galactose, fucose, 2-deoxyglucose and arabinose. Confers sensitivity to galactose in seedlings. The sequence is that of Sugar transport protein 1 (STP1) from Arabidopsis thaliana (Mouse-ear cress).